Consider the following 129-residue polypeptide: Large-conductance mechanosensitive channel (129 aa).

Transmembrane regions (helical) follow at residues 8-28, 30-50, and 67-87; these read FIMR…AAFT, IVKS…AGAV, and GAVL…FLII.

This sequence belongs to the MscL family. In terms of assembly, homopentamer.

The protein resides in the cell membrane. Channel that opens in response to stretch forces in the membrane lipid bilayer. May participate in the regulation of osmotic pressure changes within the cell. This Oenococcus oeni (strain ATCC BAA-331 / PSU-1) protein is Large-conductance mechanosensitive channel.